A 454-amino-acid chain; its full sequence is tRNA modification GTPase MnmE (454 aa).

(6S)-5-formyl-5,6,7,8-tetrahydrofolate-binding residues include Arg23, Glu80, and Lys120. One can recognise a TrmE-type G domain in the interval Gly216 to Gly377. Asn226 contributes to the K(+) binding site. GTP-binding positions include Asn226 to Ser231, Thr245 to Thr251, and Asp270 to Gly273. Ser230 is a binding site for Mg(2+). K(+)-binding residues include Thr245, Ile247, and Thr250. Mg(2+) is bound at residue Thr251. Position 454 (Lys454) interacts with (6S)-5-formyl-5,6,7,8-tetrahydrofolate.

This sequence belongs to the TRAFAC class TrmE-Era-EngA-EngB-Septin-like GTPase superfamily. TrmE GTPase family. As to quaternary structure, homodimer. Heterotetramer of two MnmE and two MnmG subunits. It depends on K(+) as a cofactor.

The protein localises to the cytoplasm. In terms of biological role, exhibits a very high intrinsic GTPase hydrolysis rate. Involved in the addition of a carboxymethylaminomethyl (cmnm) group at the wobble position (U34) of certain tRNAs, forming tRNA-cmnm(5)s(2)U34. The polypeptide is tRNA modification GTPase MnmE (Mannheimia succiniciproducens (strain KCTC 0769BP / MBEL55E)).